The chain runs to 289 residues: Probable prolyl 4-hydroxylase 10 (289 aa).

A helical; Signal-anchor for type II membrane protein transmembrane segment spans residues 20–40; sequence LVFAVLIMSTFVILILLAFGI. Residues 41-289 lie on the Lumenal side of the membrane; that stretch reads LSVPSNNAGS…KWLRVHEYKV (249 aa). A Fe2OG dioxygenase domain is found at 161-284; sequence HGEGLQVLHY…KWSSTKWLRV (124 aa). Residues His179 and Asp181 each coordinate Fe cation. Asn220 is a glycosylation site (N-linked (GlcNAc...) asparagine). A Fe cation-binding site is contributed by His265. Lys275 lines the 2-oxoglutarate pocket.

Belongs to the P4HA family. Fe(2+) is required as a cofactor. L-ascorbate serves as cofactor.

The protein localises to the endoplasmic reticulum membrane. It catalyses the reaction L-prolyl-[collagen] + 2-oxoglutarate + O2 = trans-4-hydroxy-L-prolyl-[collagen] + succinate + CO2. Its function is as follows. Catalyzes the post-translational formation of 4-hydroxyproline in -Xaa-Pro-Gly- sequences in proline-rich peptide sequences of plant glycoproteins and other proteins. Hydroxyprolines are important constituent of many plant cell wall glycoproteins such as extensins, hydroxyproline-rich glycoproteins, lectins and arabinogalactan proteins. In Arabidopsis thaliana (Mouse-ear cress), this protein is Probable prolyl 4-hydroxylase 10.